The sequence spans 155 residues: Large ribosomal subunit protein uL30 (155 aa).

It belongs to the universal ribosomal protein uL30 family. In terms of assembly, part of the 50S ribosomal subunit.

The sequence is that of Large ribosomal subunit protein uL30 from Pyrococcus furiosus (strain ATCC 43587 / DSM 3638 / JCM 8422 / Vc1).